Reading from the N-terminus, the 191-residue chain is Ribosome maturation factor RimM (191 aa).

Residues 99–172 (TDEFYQIDLI…FLVVDPVAAG (74 aa)) form the PRC barrel domain.

Belongs to the RimM family. Binds ribosomal protein uS19.

It localises to the cytoplasm. Functionally, an accessory protein needed during the final step in the assembly of 30S ribosomal subunit, possibly for assembly of the head region. Essential for efficient processing of 16S rRNA. May be needed both before and after RbfA during the maturation of 16S rRNA. It has affinity for free ribosomal 30S subunits but not for 70S ribosomes. The protein is Ribosome maturation factor RimM of Bartonella bacilliformis (strain ATCC 35685 / KC583 / Herrer 020/F12,63).